The chain runs to 591 residues: NADH-quinone oxidoreductase subunit C/D (591 aa).

Residues 1 to 182 (MVTVVENTDP…TPYFLNTAKQ (182 aa)) form an NADH dehydrogenase I subunit C region. Residues 206-591 (DFMFLNIGPN…IDIVMADCDR (386 aa)) are NADH dehydrogenase I subunit D.

In the N-terminal section; belongs to the complex I 30 kDa subunit family. The protein in the C-terminal section; belongs to the complex I 49 kDa subunit family. In terms of assembly, NDH-1 is composed of 13 different subunits. Subunits NuoB, CD, E, F, and G constitute the peripheral sector of the complex.

The protein resides in the cell inner membrane. It carries out the reaction a quinone + NADH + 5 H(+)(in) = a quinol + NAD(+) + 4 H(+)(out). Functionally, NDH-1 shuttles electrons from NADH, via FMN and iron-sulfur (Fe-S) centers, to quinones in the respiratory chain. The immediate electron acceptor for the enzyme in this species is believed to be ubiquinone. Couples the redox reaction to proton translocation (for every two electrons transferred, four hydrogen ions are translocated across the cytoplasmic membrane), and thus conserves the redox energy in a proton gradient. In Psychrobacter cryohalolentis (strain ATCC BAA-1226 / DSM 17306 / VKM B-2378 / K5), this protein is NADH-quinone oxidoreductase subunit C/D.